Here is a 108-residue protein sequence, read N- to C-terminus: MFKGGMGNMMKQAQQMQDRMQKAQDEIATLEVVGEAGAGLVKVTMLGNHNVRRVELDESLMQDDKDMIEDLLAAACNDAVRRVADETQERMGKVTGGMQLPPGMKMPF.

2 disordered regions span residues 1-20 (MFKG…QDRM) and 87-108 (TQER…KMPF).

Belongs to the YbaB/EbfC family. In terms of assembly, homodimer.

It localises to the cytoplasm. The protein resides in the nucleoid. Binds to DNA and alters its conformation. May be involved in regulation of gene expression, nucleoid organization and DNA protection. The protein is Nucleoid-associated protein PSHAa1202 of Pseudoalteromonas translucida (strain TAC 125).